A 587-amino-acid chain; its full sequence is RuBisCO large subunit-binding protein subunit alpha, chloroplastic (587 aa).

Polar residues predominate over residues 1-25 (MASTNALSSTSILRSPTNQAQTSLS). The segment at 1 to 33 (MASTNALSSTSILRSPTNQAQTSLSKKVKQHGR) is disordered. The N-terminal 47 residues, 1 to 47 (MASTNALSSTSILRSPTNQAQTSLSKKVKQHGRVNFRQKPNRFVVKA), are a transit peptide targeting the chloroplast.

It belongs to the chaperonin (HSP60) family. As to quaternary structure, oligomer of probably six alpha and six beta subunits.

The protein localises to the plastid. It is found in the chloroplast. Functionally, this protein binds RuBisCO small and large subunits and is implicated in the assembly of the enzyme oligomer. The sequence is that of RuBisCO large subunit-binding protein subunit alpha, chloroplastic from Pisum sativum (Garden pea).